A 372-amino-acid chain; its full sequence is Chorismate synthase (372 aa).

NADP(+) contacts are provided by Arg-48 and Arg-54. FMN is bound by residues 125–127 (RSS), 238–239 (NA), Gly-278, 293–297 (KPTSS), and Arg-319.

The protein belongs to the chorismate synthase family. As to quaternary structure, homotetramer. The cofactor is FMNH2.

The catalysed reaction is 5-O-(1-carboxyvinyl)-3-phosphoshikimate = chorismate + phosphate. Its pathway is metabolic intermediate biosynthesis; chorismate biosynthesis; chorismate from D-erythrose 4-phosphate and phosphoenolpyruvate: step 7/7. In terms of biological role, catalyzes the anti-1,4-elimination of the C-3 phosphate and the C-6 proR hydrogen from 5-enolpyruvylshikimate-3-phosphate (EPSP) to yield chorismate, which is the branch point compound that serves as the starting substrate for the three terminal pathways of aromatic amino acid biosynthesis. This reaction introduces a second double bond into the aromatic ring system. The sequence is that of Chorismate synthase from Xylella fastidiosa (strain M23).